Consider the following 577-residue polypeptide: MTSKVGAVATKTYREKLGPEILEVFDKSYKSFTDVQVLAGTHLLNLSDVVVESPTGSGKTLAFVLPMMRMIQNARLQPNEIGALILSPSRELCSQIVNVIKPFAEKMKLNVETVTGGQKVDKNIKMFKNKDINILVATPGRLFQIIQHEKTMIARAMKGVQLLVIDEADRFNEIQFEDHMREILSCIPKQRRTGLFSATQVKEEDDLMVFGLRNAKQVKVSQERNSAAPSTLKNYFVECPADEKTSVCLEFIRQRTDKKVLIFFPSCNSVRYFHKIFERCLTKRPLFAVHGKCSNPHRAAQIKAFSESTNGVMISTDVMARGIDITDIDWVIQYDLPKHSSWFVHRAGRTARCGRDGNALILIATEQLAYVSFLDNHEKVKLEEVKVPTSTSRKAEELRQKMIKIQVSDRAILELGTRAFVSHIESYAKHDCHLICSLDDLNVVGLANSYALLRLPKMRELAQRKDLNQFDRSDIETSEIKYADPKLEANRDTVMKEKHEKKIETLAAKEKKRREKEARKMKRAGGRFKSRATGANAEEKRAKKRKSEEEDDAQNDIRLLKKIKRGKLSKKEIKDVL.

Residues 7–37 carry the Q motif motif; that stretch reads AVATKTYREKLGPEILEVFDKSYKSFTDVQV. The 179-residue stretch at 40-218 folds into the Helicase ATP-binding domain; it reads GTHLLNLSDV…VFGLRNAKQV (179 aa). Residue 53-60 participates in ATP binding; it reads SPTGSGKT. Residues 166 to 169 carry the DEAD box motif; it reads DEAD. The 163-residue stretch at 231–393 folds into the Helicase C-terminal domain; that stretch reads TLKNYFVECP…EVKVPTSTSR (163 aa). The tract at residues 508-577 is disordered; the sequence is AKEKKRREKE…LSKKEIKDVL (70 aa). Residues 510–530 show a composition bias toward basic residues; sequence EKKRREKEARKMKRAGGRFKS.

It belongs to the DEAD box helicase family. DDX55/SPB4 subfamily.

The catalysed reaction is ATP + H2O = ADP + phosphate + H(+). Probable ATP-binding RNA helicase. The polypeptide is Probable ATP-dependent RNA helicase DDX55 homolog (Caenorhabditis briggsae).